Consider the following 349-residue polypeptide: UDP-3-O-acylglucosamine N-acyltransferase (349 aa).

H240 serves as the catalytic Proton acceptor.

It belongs to the transferase hexapeptide repeat family. LpxD subfamily. In terms of assembly, homotrimer.

The catalysed reaction is a UDP-3-O-[(3R)-3-hydroxyacyl]-alpha-D-glucosamine + a (3R)-hydroxyacyl-[ACP] = a UDP-2-N,3-O-bis[(3R)-3-hydroxyacyl]-alpha-D-glucosamine + holo-[ACP] + H(+). It functions in the pathway bacterial outer membrane biogenesis; LPS lipid A biosynthesis. Its function is as follows. Catalyzes the N-acylation of UDP-3-O-acylglucosamine using 3-hydroxyacyl-ACP as the acyl donor. Is involved in the biosynthesis of lipid A, a phosphorylated glycolipid that anchors the lipopolysaccharide to the outer membrane of the cell. In Porphyromonas gingivalis (strain ATCC BAA-308 / W83), this protein is UDP-3-O-acylglucosamine N-acyltransferase.